We begin with the raw amino-acid sequence, 281 residues long: Pantothenate synthetase (281 aa).

30–37 (MGYLHEGH) is an ATP binding site. Histidine 37 (proton donor) is an active-site residue. Glutamine 61 contributes to the (R)-pantoate binding site. Residue glutamine 61 coordinates beta-alanine. An ATP-binding site is contributed by 147 to 150 (GEKD). Glutamine 153 provides a ligand contact to (R)-pantoate. Residues isoleucine 176 and 184–187 (KSSR) each bind ATP.

It belongs to the pantothenate synthetase family. As to quaternary structure, homodimer.

The protein resides in the cytoplasm. The enzyme catalyses (R)-pantoate + beta-alanine + ATP = (R)-pantothenate + AMP + diphosphate + H(+). It functions in the pathway cofactor biosynthesis; (R)-pantothenate biosynthesis; (R)-pantothenate from (R)-pantoate and beta-alanine: step 1/1. Catalyzes the condensation of pantoate with beta-alanine in an ATP-dependent reaction via a pantoyl-adenylate intermediate. This Clostridium botulinum (strain ATCC 19397 / Type A) protein is Pantothenate synthetase.